Reading from the N-terminus, the 316-residue chain is Protein U25 (316 aa).

The protein belongs to the herpesviridae US22 family.

This is Protein U25 (U25) from Homo sapiens (Human).